The sequence spans 732 residues: Putative pectinesterase/pectinesterase inhibitor 28 (732 aa).

The chain crosses the membrane as a helical span at residues 17 to 37 (VIISISSVLLISMVVAVTIGV). 4 N-linked (GlcNAc...) asparagine glycosylation sites follow: Asn40, Asn93, Asn278, and Asn297. Residues 51 to 204 (TTSVKAIKDV…VQLTHNGLAM (154 aa)) form a pectinesterase inhibitor 28 region. Residues 252–548 (DIVVAQDGSG…FTPAQYIQGD (297 aa)) form a pectinesterase 28 region. Residues Thr327 and Gln357 each contribute to the substrate site. The active-site Proton donor; for pectinesterase activity is the Asp380. A disulfide bond links Cys394 and Cys414. Asp401 acts as the Nucleophile; for pectinesterase activity in catalysis. Asn413 is a glycosylation site (N-linked (GlcNAc...) asparagine). Residues Arg469 and Trp471 each coordinate substrate. Asn566, Asn570, and Asn581 each carry an N-linked (GlcNAc...) asparagine glycan. Composition is skewed to low complexity over residues 570 to 620 (NSTV…PSTS) and 633 to 732 (PSMV…SSIG). A disordered region spans residues 570–732 (NSTVTGSSLS…PSASPQSSIG (163 aa)).

In the N-terminal section; belongs to the PMEI family. It in the C-terminal section; belongs to the pectinesterase family. Expressed in flower buds.

The protein localises to the membrane. It catalyses the reaction [(1-&gt;4)-alpha-D-galacturonosyl methyl ester](n) + n H2O = [(1-&gt;4)-alpha-D-galacturonosyl](n) + n methanol + n H(+). It participates in glycan metabolism; pectin degradation; 2-dehydro-3-deoxy-D-gluconate from pectin: step 1/5. Its function is as follows. Acts in the modification of cell walls via demethylesterification of cell wall pectin. This Arabidopsis thaliana (Mouse-ear cress) protein is Putative pectinesterase/pectinesterase inhibitor 28 (PME28).